The chain runs to 626 residues: NAD-dependent malic enzyme, mitochondrial (626 aa).

The transit peptide at 1-34 (MAIFSNQMRLSSTLLKRLHQRVAAAVNSSSSRNF) directs the protein to the mitochondrion. Residues R91 and R125 each coordinate fumarate. Catalysis depends on Y146, which acts as the Proton donor. Position 199 (R199) interacts with (S)-malate. R199 contacts NAD(+). The Proton acceptor role is filled by K217. The a divalent metal cation site is built by E288, D289, and D312. NAD(+) contacts are provided by A348 and A351. (S)-malate is bound by residues N467 and N512.

Belongs to the malic enzymes family. Heterodimer of two related subunits. Mg(2+) is required as a cofactor. Mn(2+) serves as cofactor.

It is found in the mitochondrion matrix. It catalyses the reaction (S)-malate + NAD(+) = pyruvate + CO2 + NADH. This chain is NAD-dependent malic enzyme, mitochondrial, found in Solanum tuberosum (Potato).